Here is a 119-residue protein sequence, read N- to C-terminus: DNA-directed RNA polymerase subunit omega (119 aa).

This sequence belongs to the RNA polymerase subunit omega family. The RNAP catalytic core consists of 2 alpha, 1 beta, 1 beta' and 1 omega subunit. When a sigma factor is associated with the core the holoenzyme is formed, which can initiate transcription.

It catalyses the reaction RNA(n) + a ribonucleoside 5'-triphosphate = RNA(n+1) + diphosphate. Promotes RNA polymerase assembly. Latches the N- and C-terminal regions of the beta' subunit thereby facilitating its interaction with the beta and alpha subunits. This chain is DNA-directed RNA polymerase subunit omega (rpoZ), found in Caulobacter vibrioides (strain ATCC 19089 / CIP 103742 / CB 15) (Caulobacter crescentus).